Consider the following 990-residue polypeptide: Protein argonaute 7 (990 aa).

Basic residues predominate over residues 1–13 (MEEKTHHHHHSTN). The segment at 1 to 25 (MEEKTHHHHHSTNKHIPSSKSRTPL) is disordered. Positions 379 to 484 (EFLTDLPRNK…LPMELCMICE (106 aa)) constitute a PAZ domain. Residues 649 to 950 (LIICVMEKKH…AAYRGRLYIE (302 aa)) form the Piwi domain. Positions 953–973 (SESNGGSMNPSSVSRVGPPKT) are disordered. Polar residues predominate over residues 954 to 966 (ESNGGSMNPSSVS).

Belongs to the argonaute family. Ago subfamily. As to expression, expressed in leaves and floral buds, and at low levels in roots.

Its function is as follows. Involved in RNA-mediated post-transcriptional gene silencing (PTGS). Main component of the RNA-induced silencing complex (RISC) that binds to a short guide RNA such as a microRNA (miRNA) or small interfering RNA (siRNA). RISC uses the mature miRNA or siRNA as a guide for slicer-directed cleavage of homologous mRNAs to repress gene expression. Required for the processing of 21 nucleotide trans-acting siRNAs (ta-siRNAs) derived from TAS3a transcripts. Associates preferentially with the microRNA (miRNA) miR390 which guides the cleavage of TAS3 precursor RNA. Seems to act as miR390 specific slicer. Associates mainly with small RNAs of 21 nucleotide in length and with a 5' terminal adenosine. Acts in the RDR6/SGS3/DCL4/AGO7 trans-acting siRNA pathway involved in leaf developmental timing. Does not seem to act on leaf polarity. Required for the production of the 30-40nt bacterial-induced long siRNAs (lsiRNA). Involved in antiviral RNA silencing by contributing to efficient viral RNAs clearance. Targets less structured viral RNAs than AGO1 which is capable of targeting RNAs with more compact structures. In Arabidopsis thaliana (Mouse-ear cress), this protein is Protein argonaute 7 (AGO7).